Consider the following 412-residue polypeptide: DnaJ homolog subfamily A member 2 (412 aa).

The J domain occupies 8 to 70 (KLYDILGVPP…EKRELYDRYG (63 aa)). Lysine 39 is modified (N6-acetyllysine). Serine 78 and serine 123 each carry phosphoserine. The segment at 130–214 (GKTTKLQLSK…CEGKKVIKEV (85 aa)) adopts a CR-type zinc-finger fold. Lysine 134 is covalently cross-linked (Glycyl lysine isopeptide (Lys-Gly) (interchain with G-Cter in SUMO2)). 2 residues coordinate Zn(2+): cysteine 143 and cysteine 146. The stretch at 143–150 (CSACSGQG) is one CXXCXGXG motif repeat. Lysine 152 carries the N6-acetyllysine modification. The Zn(2+) site is built by cysteine 159, cysteine 162, cysteine 186, cysteine 189, cysteine 202, and cysteine 205. CXXCXGXG motif repeat units lie at residues 159–166 (CSACRGRG), 186–193 (CSDCNGEG), and 202–209 (CKKCEGKK). The interval 359–412 (PEVPNIIGDTEEVELQEFDSTRGSGGGQRREAYNDSSDEESSSHHGPGVQCAHQ) is disordered. Position 391 is a phosphotyrosine (tyrosine 391). Residues serine 394 and serine 395 each carry the phosphoserine modification. Cysteine 409 carries the cysteine methyl ester modification. Residue cysteine 409 is the site of S-farnesyl cysteine attachment. The propeptide at 410 to 412 (AHQ) is removed in mature form.

The protein localises to the membrane. Functionally, co-chaperone of Hsc70. Stimulates ATP hydrolysis and the folding of unfolded proteins mediated by HSPA1A/B (in vitro). The polypeptide is DnaJ homolog subfamily A member 2 (DNAJA2) (Bos taurus (Bovine)).